A 638-amino-acid chain; its full sequence is Chaperone protein HtpG (638 aa).

Residues 1 to 346 form an a; substrate-binding region; it reads MSQQETHGFQ…SNDLPLNVSR (346 aa). Residues 347-563 are b; the sequence is EILQDNKVTT…EGEMSTQMIK (217 aa). Residues 564 to 638 are c; it reads LMQAAGQDVP…MNQMLLASVK (75 aa).

This sequence belongs to the heat shock protein 90 family. As to quaternary structure, homodimer.

The protein resides in the cytoplasm. Functionally, molecular chaperone. Has ATPase activity. The chain is Chaperone protein HtpG from Shewanella pealeana (strain ATCC 700345 / ANG-SQ1).